The sequence spans 366 residues: RNA 3'-terminal phosphate cyclase (366 aa).

The ATP site is built by Gln-104, Pro-131, Tyr-294, Asp-297, Gln-298, and His-320. His-320 (tele-AMP-histidine intermediate) is an active-site residue.

This sequence belongs to the RNA 3'-terminal cyclase family. Type 1 subfamily.

It localises to the nucleus. Its subcellular location is the nucleoplasm. The enzyme catalyses a 3'-end 3'-phospho-ribonucleotide-RNA + ATP = a 3'-end 2',3'-cyclophospho-ribonucleotide-RNA + AMP + diphosphate. Functionally, catalyzes the conversion of 3'-phosphate to a 2',3'-cyclic phosphodiester at the end of RNA. The mechanism of action of the enzyme occurs in 3 steps: (A) adenylation of the enzyme by ATP; (B) transfer of adenylate to an RNA-N3'P to produce RNA-N3'PP5'A; (C) and attack of the adjacent 2'-hydroxyl on the 3'-phosphorus in the diester linkage to produce the cyclic end product. Likely functions in some aspects of cellular RNA processing. Function plays an important role in regulating axon regeneration by inhibiting central nervous system (CNS) axon regeneration following optic nerve injury. The chain is RNA 3'-terminal phosphate cyclase (RTCA) from Macaca fascicularis (Crab-eating macaque).